We begin with the raw amino-acid sequence, 268 residues long: Shikimate dehydrogenase (NADP(+)) (268 aa).

Threonine 62 serves as a coordination point for shikimate. The Proton acceptor role is filled by lysine 66. Glutamate 78 lines the NADP(+) pocket. The shikimate site is built by asparagine 87 and aspartate 102. NADP(+) contacts are provided by residues 126 to 130 (GSGGI) and leucine 207. A shikimate-binding site is contributed by tyrosine 209. Residue glycine 230 coordinates NADP(+).

It belongs to the shikimate dehydrogenase family. Homodimer.

It carries out the reaction shikimate + NADP(+) = 3-dehydroshikimate + NADPH + H(+). The protein operates within metabolic intermediate biosynthesis; chorismate biosynthesis; chorismate from D-erythrose 4-phosphate and phosphoenolpyruvate: step 4/7. Functionally, involved in the biosynthesis of the chorismate, which leads to the biosynthesis of aromatic amino acids. Catalyzes the reversible NADPH linked reduction of 3-dehydroshikimate (DHSA) to yield shikimate (SA). The chain is Shikimate dehydrogenase (NADP(+)) from Thermoplasma acidophilum (strain ATCC 25905 / DSM 1728 / JCM 9062 / NBRC 15155 / AMRC-C165).